The primary structure comprises 490 residues: Argininosuccinate lyase (490 aa).

2 disordered regions span residues 426-452 (DPES…LSAA) and 469-490 (ALAT…TAPE). A compositionally biased stretch (low complexity) spans 440–452 (PAPESMAAALSAA). Basic and acidic residues predominate over residues 469–480 (ALATAADERERV).

The protein belongs to the lyase 1 family. Argininosuccinate lyase subfamily.

The protein resides in the cytoplasm. The enzyme catalyses 2-(N(omega)-L-arginino)succinate = fumarate + L-arginine. It functions in the pathway amino-acid biosynthesis; L-arginine biosynthesis; L-arginine from L-ornithine and carbamoyl phosphate: step 3/3. The sequence is that of Argininosuccinate lyase from Natronomonas pharaonis (strain ATCC 35678 / DSM 2160 / CIP 103997 / JCM 8858 / NBRC 14720 / NCIMB 2260 / Gabara) (Halobacterium pharaonis).